Consider the following 285-residue polypeptide: Pantothenate synthetase (285 aa).

ATP is bound at residue 30–37 (MGNLHDGH). H37 serves as the catalytic Proton donor. (R)-pantoate is bound at residue Q61. Q61 is a binding site for beta-alanine. 148–151 (GEKD) contributes to the ATP binding site. Q154 contributes to the (R)-pantoate binding site. Residue 185-188 (RSSR) coordinates ATP.

It belongs to the pantothenate synthetase family. Homodimer.

It is found in the cytoplasm. The catalysed reaction is (R)-pantoate + beta-alanine + ATP = (R)-pantothenate + AMP + diphosphate + H(+). Its pathway is cofactor biosynthesis; (R)-pantothenate biosynthesis; (R)-pantothenate from (R)-pantoate and beta-alanine: step 1/1. Its function is as follows. Catalyzes the condensation of pantoate with beta-alanine in an ATP-dependent reaction via a pantoyl-adenylate intermediate. This Alcanivorax borkumensis (strain ATCC 700651 / DSM 11573 / NCIMB 13689 / SK2) protein is Pantothenate synthetase.